A 146-amino-acid polypeptide reads, in one-letter code: Hemoglobin subunit beta (146 aa).

The residue at position 1 (V1) is an N-acetylvaline. A Globin domain is found at H2–H146. Position 44 is a phosphoserine (S44). K59 bears the N6-acetyllysine mark. H63 contributes to the heme b binding site. K82 is modified (N6-acetyllysine). H92 provides a ligand contact to heme b. Position 93 is an S-nitrosocysteine (C93). N6-acetyllysine is present on K144.

This sequence belongs to the globin family. As to quaternary structure, heterotetramer of two alpha chains and two beta chains. Red blood cells.

Involved in oxygen transport from the lung to the various peripheral tissues. In Lyroderma lyra (Greater Asian false-vampire bat), this protein is Hemoglobin subunit beta (HBB).